A 700-amino-acid polypeptide reads, in one-letter code: non-specific serine/threonine protein kinase Cdc7 (700 aa).

In terms of domain architecture, Protein kinase spans 127 to 644 (FDVHSRIGNG…AEEALKHPFF (518 aa)). ATP is bound by residues 133–141 (IGNGTFSTV) and Lys-163. Asp-250 serves as the catalytic Proton acceptor.

The protein belongs to the protein kinase superfamily. Ser/Thr protein kinase family. Component of the Dbf4-dependent kinase (DDK) complex consisting of Cdc7 and the Dbf4 ortholog chif. Interacts with chif (via the processed polypeptide Chiffon-A); the interaction is direct.

It catalyses the reaction L-seryl-[protein] + ATP = O-phospho-L-seryl-[protein] + ADP + H(+). The enzyme catalyses L-threonyl-[protein] + ATP = O-phospho-L-threonyl-[protein] + ADP + H(+). Activated by chif. Inhibited by the synthetic compound XL413. Functionally, catalytic component of the Dbf4-dependent kinase (DDK) complex. Phosphorylates components of the pre-replication complex, including Mcm2 and, to a lesser extent, Mcm4. Phosphorylates histones, including H3 and H2B. Required for DNA replication and mitotic proliferation, including during the endoreplication and amplification stages of DNA replication in egg chamber follicle cells of the ovary. This chain is non-specific serine/threonine protein kinase Cdc7, found in Drosophila melanogaster (Fruit fly).